The chain runs to 337 residues: DNA-directed RNA polymerase subunit alpha (337 aa).

Positions 1–233 (MVREEVVGST…DLFIPFLHAE (233 aa)) are alpha N-terminal domain (alpha-NTD). The alpha C-terminal domain (alpha-CTD) stretch occupies residues 265-337 (KEIALKCIFI…FAIDLPKNKF (73 aa)).

The protein belongs to the RNA polymerase alpha chain family. In terms of assembly, in plastids the minimal PEP RNA polymerase catalytic core is composed of four subunits: alpha, beta, beta', and beta''. When a (nuclear-encoded) sigma factor is associated with the core the holoenzyme is formed, which can initiate transcription.

It localises to the plastid. Its subcellular location is the chloroplast. It catalyses the reaction RNA(n) + a ribonucleoside 5'-triphosphate = RNA(n+1) + diphosphate. In terms of biological role, DNA-dependent RNA polymerase catalyzes the transcription of DNA into RNA using the four ribonucleoside triphosphates as substrates. The protein is DNA-directed RNA polymerase subunit alpha of Acorus gramineus (Dwarf sweet flag).